A 352-amino-acid chain; its full sequence is 4-hydroxy-3-methylbut-2-enyl diphosphate reductase (352 aa).

C36 is a binding site for [4Fe-4S] cluster. H76 and H114 together coordinate (2E)-4-hydroxy-3-methylbut-2-enyl diphosphate. The dimethylallyl diphosphate site is built by H76 and H114. Positions 76 and 114 each coordinate isopentenyl diphosphate. C136 is a binding site for [4Fe-4S] cluster. H164 contacts (2E)-4-hydroxy-3-methylbut-2-enyl diphosphate. H164 lines the dimethylallyl diphosphate pocket. H164 contributes to the isopentenyl diphosphate binding site. Residue E166 is the Proton donor of the active site. T204 contacts (2E)-4-hydroxy-3-methylbut-2-enyl diphosphate. C234 lines the [4Fe-4S] cluster pocket. Residues S262, S263, N264, and S309 each coordinate (2E)-4-hydroxy-3-methylbut-2-enyl diphosphate. Dimethylallyl diphosphate-binding residues include S262, S263, N264, and S309. Residues S262, S263, N264, and S309 each contribute to the isopentenyl diphosphate site.

The protein belongs to the IspH family. [4Fe-4S] cluster serves as cofactor.

It carries out the reaction isopentenyl diphosphate + 2 oxidized [2Fe-2S]-[ferredoxin] + H2O = (2E)-4-hydroxy-3-methylbut-2-enyl diphosphate + 2 reduced [2Fe-2S]-[ferredoxin] + 2 H(+). It catalyses the reaction dimethylallyl diphosphate + 2 oxidized [2Fe-2S]-[ferredoxin] + H2O = (2E)-4-hydroxy-3-methylbut-2-enyl diphosphate + 2 reduced [2Fe-2S]-[ferredoxin] + 2 H(+). The protein operates within isoprenoid biosynthesis; dimethylallyl diphosphate biosynthesis; dimethylallyl diphosphate from (2E)-4-hydroxy-3-methylbutenyl diphosphate: step 1/1. Its pathway is isoprenoid biosynthesis; isopentenyl diphosphate biosynthesis via DXP pathway; isopentenyl diphosphate from 1-deoxy-D-xylulose 5-phosphate: step 6/6. Functionally, catalyzes the conversion of 1-hydroxy-2-methyl-2-(E)-butenyl 4-diphosphate (HMBPP) into a mixture of isopentenyl diphosphate (IPP) and dimethylallyl diphosphate (DMAPP). Acts in the terminal step of the DOXP/MEP pathway for isoprenoid precursor biosynthesis. The chain is 4-hydroxy-3-methylbut-2-enyl diphosphate reductase from Bifidobacterium longum (strain NCC 2705).